The chain runs to 383 residues: S-adenosylmethionine synthase 1 (383 aa).

H15 contacts ATP. Mg(2+) is bound at residue D17. K(+) is bound at residue E43. Residues E56 and Q99 each coordinate L-methionine. A flexible loop region spans residues 99–109 (QSPDIDLGVSR). Residues 162 to 164 (DGK), 228 to 229 (RF), D237, 243 to 244 (RK), A260, and K264 contribute to the ATP site. D237 lines the L-methionine pocket. K268 contacts L-methionine.

It belongs to the AdoMet synthase family. In terms of assembly, homotetramer; dimer of dimers. It depends on Mg(2+) as a cofactor. The cofactor is K(+).

The protein localises to the cytoplasm. The catalysed reaction is L-methionine + ATP + H2O = S-adenosyl-L-methionine + phosphate + diphosphate. Its pathway is amino-acid biosynthesis; S-adenosyl-L-methionine biosynthesis; S-adenosyl-L-methionine from L-methionine: step 1/1. Functionally, catalyzes the formation of S-adenosylmethionine (AdoMet) from methionine and ATP. The overall synthetic reaction is composed of two sequential steps, AdoMet formation and the subsequent tripolyphosphate hydrolysis which occurs prior to release of AdoMet from the enzyme. In Rhodospirillum rubrum (strain ATCC 11170 / ATH 1.1.1 / DSM 467 / LMG 4362 / NCIMB 8255 / S1), this protein is S-adenosylmethionine synthase 1.